The primary structure comprises 276 residues: 4-deoxy-L-threo-5-hexosulose-uronate ketol-isomerase 2 (276 aa).

Positions 194, 196, 201, and 243 each coordinate Zn(2+).

The protein belongs to the KduI family. The cofactor is Zn(2+).

The enzyme catalyses 5-dehydro-4-deoxy-D-glucuronate = 3-deoxy-D-glycero-2,5-hexodiulosonate. It participates in glycan metabolism; pectin degradation; 2-dehydro-3-deoxy-D-gluconate from pectin: step 4/5. Catalyzes the isomerization of 5-dehydro-4-deoxy-D-glucuronate to 3-deoxy-D-glycero-2,5-hexodiulosonate. The chain is 4-deoxy-L-threo-5-hexosulose-uronate ketol-isomerase 2 (kduI2) from Enterococcus faecalis (strain ATCC 700802 / V583).